Reading from the N-terminus, the 302-residue chain is N-acetylmuramic acid 6-phosphate etherase (302 aa).

An SIS domain is found at 58-221; it reads IGESFLNGGR…STGAMVKTGK (164 aa). Glu86 acts as the Proton donor in catalysis. Glu117 is an active-site residue.

This sequence belongs to the GCKR-like family. MurNAc-6-P etherase subfamily. As to quaternary structure, homodimer.

It catalyses the reaction N-acetyl-D-muramate 6-phosphate + H2O = N-acetyl-D-glucosamine 6-phosphate + (R)-lactate. It participates in amino-sugar metabolism; N-acetylmuramate degradation. Specifically catalyzes the cleavage of the D-lactyl ether substituent of MurNAc 6-phosphate, producing GlcNAc 6-phosphate and D-lactate. This Clostridium botulinum (strain Langeland / NCTC 10281 / Type F) protein is N-acetylmuramic acid 6-phosphate etherase.